The sequence spans 1158 residues: ATP-dependent helicase/deoxyribonuclease subunit B (1158 aa).

Residue 8–15 (GRAGTGKS) coordinates ATP. [4Fe-4S] cluster is bound by residues Cys791, Cys1112, Cys1115, and Cys1121.

Belongs to the helicase family. AddB/RexB type 1 subfamily. Heterodimer of AddA and AddB. The cofactor is Mg(2+). It depends on [4Fe-4S] cluster as a cofactor.

The heterodimer acts as both an ATP-dependent DNA helicase and an ATP-dependent, dual-direction single-stranded exonuclease. Recognizes the chi site generating a DNA molecule suitable for the initiation of homologous recombination. The AddB subunit has 5' -&gt; 3' nuclease activity but not helicase activity. This is ATP-dependent helicase/deoxyribonuclease subunit B from Clostridium perfringens (strain ATCC 13124 / DSM 756 / JCM 1290 / NCIMB 6125 / NCTC 8237 / Type A).